A 199-amino-acid polypeptide reads, in one-letter code: Ciliary neurotrophic factor (199 aa).

Belongs to the CNTF family. As to expression, nervous system.

The protein localises to the cytoplasm. CNTF is a survival factor for various neuronal cell types. Seems to prevent the degeneration of motor axons after axotomy. The chain is Ciliary neurotrophic factor (CNTF) from Oryctolagus cuniculus (Rabbit).